The chain runs to 355 residues: Probable dual-specificity RNA methyltransferase RlmN (355 aa).

E89 (proton acceptor) is an active-site residue. One can recognise a Radical SAM core domain in the interval 95 to 322 (YENRKTVCLS…KRLGVPTSIR (228 aa)). Cysteines 102 and 333 form a disulfide. C109, C113, and C116 together coordinate [4Fe-4S] cluster. Residues 159–160 (GE), S191, 214–216 (SLH), and N290 each bind S-adenosyl-L-methionine. Residue C333 is the S-methylcysteine intermediate of the active site.

This sequence belongs to the radical SAM superfamily. RlmN family. [4Fe-4S] cluster serves as cofactor.

It is found in the cytoplasm. It carries out the reaction adenosine(2503) in 23S rRNA + 2 reduced [2Fe-2S]-[ferredoxin] + 2 S-adenosyl-L-methionine = 2-methyladenosine(2503) in 23S rRNA + 5'-deoxyadenosine + L-methionine + 2 oxidized [2Fe-2S]-[ferredoxin] + S-adenosyl-L-homocysteine. It catalyses the reaction adenosine(37) in tRNA + 2 reduced [2Fe-2S]-[ferredoxin] + 2 S-adenosyl-L-methionine = 2-methyladenosine(37) in tRNA + 5'-deoxyadenosine + L-methionine + 2 oxidized [2Fe-2S]-[ferredoxin] + S-adenosyl-L-homocysteine. Specifically methylates position 2 of adenine 2503 in 23S rRNA and position 2 of adenine 37 in tRNAs. The chain is Probable dual-specificity RNA methyltransferase RlmN from Thermus thermophilus (strain ATCC BAA-163 / DSM 7039 / HB27).